Consider the following 434-residue polypeptide: Cobyrinate a,c-diamide synthase (434 aa).

Residues 239-430 enclose the GATase cobBQ-type domain; the sequence is KMAIAYDPAF…SHLHFSNFQL (192 aa). The Nucleophile role is filled by Cys320.

It belongs to the CobB/CbiA family. Requires Mg(2+) as cofactor.

It catalyses the reaction cob(II)yrinate + 2 L-glutamine + 2 ATP + 2 H2O = cob(II)yrinate a,c diamide + 2 L-glutamate + 2 ADP + 2 phosphate + 2 H(+). It participates in cofactor biosynthesis; adenosylcobalamin biosynthesis; cob(II)yrinate a,c-diamide from sirohydrochlorin (anaerobic route): step 10/10. Its function is as follows. Catalyzes the ATP-dependent amidation of the two carboxylate groups at positions a and c of cobyrinate, using either L-glutamine or ammonia as the nitrogen source. In Saccharolobus solfataricus (strain ATCC 35092 / DSM 1617 / JCM 11322 / P2) (Sulfolobus solfataricus), this protein is Cobyrinate a,c-diamide synthase.